We begin with the raw amino-acid sequence, 107 residues long: ATP synthase peripheral stalk subunit F6, mitochondrial (107 aa).

Residues 1–31 (MILQRLFRFSVIRSAVSVYLRRNIGVTAVAF) constitute a mitochondrion transit peptide. Residues Lys-40, Lys-45, and Lys-78 each carry the N6-acetyllysine modification. An N6-acetyllysine; alternate mark is found at Lys-93 and Lys-98. Lys-93 and Lys-98 each carry N6-succinyllysine; alternate. Lys-104 carries the post-translational modification N6-acetyllysine.

The protein belongs to the eukaryotic ATPase subunit F6 family. Component of the ATP synthase complex composed at least of ATP5F1A/subunit alpha, ATP5F1B/subunit beta, ATP5MC1/subunit c (homooctomer), MT-ATP6/subunit a, MT-ATP8/subunit 8, ATP5ME/subunit e, ATP5MF/subunit f, ATP5MG/subunit g, ATP5MK/subunit k, ATP5MJ/subunit j, ATP5F1C/subunit gamma, ATP5F1D/subunit delta, ATP5F1E/subunit epsilon, ATP5PF/subunit F6, ATP5PB/subunit b, ATP5PD/subunit d, ATP5PO/subunit OSCP. ATP synthase complex consists of a soluble F(1) head domain (subunits alpha(3) and beta(3)) - the catalytic core - and a membrane F(0) domain - the membrane proton channel (subunits c, a, 8, e, f, g, k and j). These two domains are linked by a central stalk (subunits gamma, delta, and epsilon) rotating inside the F1 region and a stationary peripheral stalk (subunits F6, b, d, and OSCP).

Its subcellular location is the mitochondrion. The protein resides in the mitochondrion inner membrane. Its function is as follows. Subunit F6, of the mitochondrial membrane ATP synthase complex (F(1)F(0) ATP synthase or Complex V) that produces ATP from ADP in the presence of a proton gradient across the membrane which is generated by electron transport complexes of the respiratory chain. ATP synthase complex consist of a soluble F(1) head domain - the catalytic core - and a membrane F(1) domain - the membrane proton channel. These two domains are linked by a central stalk rotating inside the F(1) region and a stationary peripheral stalk. During catalysis, ATP synthesis in the catalytic domain of F(1) is coupled via a rotary mechanism of the central stalk subunits to proton translocation. In vivo, can only synthesize ATP although its ATP hydrolase activity can be activated artificially in vitro. Part of the complex F(0) domain. Part of the complex F(0) domain and the peripheric stalk, which acts as a stator to hold the catalytic alpha(3)beta(3) subcomplex and subunit a/ATP6 static relative to the rotary elements. The polypeptide is ATP synthase peripheral stalk subunit F6, mitochondrial (Pongo abelii (Sumatran orangutan)).